Reading from the N-terminus, the 880-residue chain is Alanine--tRNA ligase (880 aa).

Zn(2+)-binding residues include histidine 567, histidine 571, cysteine 669, and histidine 673.

The protein belongs to the class-II aminoacyl-tRNA synthetase family. Zn(2+) serves as cofactor.

It is found in the cytoplasm. The enzyme catalyses tRNA(Ala) + L-alanine + ATP = L-alanyl-tRNA(Ala) + AMP + diphosphate. Functionally, catalyzes the attachment of alanine to tRNA(Ala) in a two-step reaction: alanine is first activated by ATP to form Ala-AMP and then transferred to the acceptor end of tRNA(Ala). Also edits incorrectly charged Ser-tRNA(Ala) and Gly-tRNA(Ala) via its editing domain. The polypeptide is Alanine--tRNA ligase (Syntrophomonas wolfei subsp. wolfei (strain DSM 2245B / Goettingen)).